Here is a 504-residue protein sequence, read N- to C-terminus: Procardosin-A (504 aa).

The N-terminal stretch at M1–S24 is a signal peptide. A propeptide spanning residues V25–R68 is cleaved from the precursor. The 417-residue stretch at Y85–A501 folds into the Peptidase A1 domain. D103 is an active-site residue. The cysteines at positions 116 and 122 are disulfide-linked. N-linked (GlcNAc...) asparagine glycosylation is present at N139. The short motif at R246–D248 is the RGD motif element. An intrachain disulfide couples C277 to C281. D286 is a catalytic residue. Residues G310 to S414 constitute a propeptide, plant-specific insert. The Saposin B-type domain maps to V311–S416. Cystine bridges form between C316–C410, C341–C382, C347–C379, and C424–C461. A glycan (N-linked (GlcNAc...) asparagine) is linked at N432. A KGE motif motif is present at residues K455–E457.

Belongs to the peptidase A1 family. As to quaternary structure, heterodimer of a light chain and a heavy chain. An intermediate form (35 kDa and 30 kDa subunits) is produced first, and undergoes proteolytic processing to remove the internal plant-specific insert (PSI) and the propeptide. There is some heterogeniety at the cleavage site. Interacts (via RGD or KGE motifs) with PLD1 (via C2 domain). Post-translationally, N-glycosylated. Glycans found at Asn-139 include approximately 6% oligomannose, 82% oligosaccharides of the plant modified type with proximal fucose but without xylose and 6% oligosaccharides of the plant modified type with proximal fucose and xylose. Glycans found at Asn-432 include 14% oligosaccharides of the plant modified type with proximal fucose but without xylose and 86% oligosaccharides of the plant modified type with proximal fucose and xylose. Detected only in pistils, not in seeds, roots, midribs, bracts, stamens, pollen, vascular or supporting tissues. Detected in seeds. High amounts are detected in the broad outer region of the upper portion of the stigma, towards the lower portion of the stigma it accumulates at the periphery. Within the stigma, expressed mainly in the epidermic papillae, lower levels are found in the cortical parenchyma. Present mainly in epidermal cells within the stye (at protein level). Expressed in young flower buds, and at lower levels in seeds, pollen and bracteas, but not in roots or leaves.

The protein localises to the microsome membrane. It is found in the protein storage vacuole. It localises to the secreted. The protein resides in the cell wall. Its subcellular location is the extracellular space. The protein localises to the extracellular matrix. With respect to regulation, inhibited by the specific aspartic proteinase inhibitors diazoacetyl-noleucine methyl ester and pepstatin. In terms of biological role, aspartic proteinase with a high preference for bonds between hydrophobic residues. Cleaves alpha-lactalbumin but not beta-lactoglobulin. This Cynara cardunculus (Cardoon) protein is Procardosin-A.